The chain runs to 177 residues: Ubiquinol-cytochrome c reductase iron-sulfur subunit (177 aa).

The helical transmembrane segment at 18–38 (IVLTASSVAAVGAACAFWPII) threads the bilayer. A Rieske domain is found at 88-175 (ARAVKMSELI…YIFISDTKIR (88 aa)). Residues cysteine 120, histidine 122, cysteine 139, and histidine 142 each coordinate [2Fe-2S] cluster. Cysteines 125 and 141 form a disulfide.

Belongs to the Rieske iron-sulfur protein family. In terms of assembly, the main subunits of complex b-c1 are: cytochrome b, cytochrome c1 and the Rieske protein. Requires [2Fe-2S] cluster as cofactor.

It localises to the cell membrane. The catalysed reaction is a quinol + 2 Fe(III)-[cytochrome c](out) = a quinone + 2 Fe(II)-[cytochrome c](out) + 2 H(+)(out). Functionally, component of the ubiquinol-cytochrome c reductase complex (complex III or cytochrome b-c1 complex), which is a respiratory chain that generates an electrochemical potential coupled to ATP synthesis. This Rickettsia typhi (strain ATCC VR-144 / Wilmington) protein is Ubiquinol-cytochrome c reductase iron-sulfur subunit (petA).